A 353-amino-acid polypeptide reads, in one-letter code: Zinc transporter 5 (353 aa).

A signal peptide spans 1 to 27 (MATAAMTKVFVLLFLVAACYLPAHAAA). Over 28-48 (AECDCATDTAGRDKAQALRLK) the chain is Extracellular. Residues 49–69 (VIAIFCILAGSTVGAALPSLG) form a helical membrane-spanning segment. The Cytoplasmic portion of the chain corresponds to 70–86 (GRFPAIQPETDVFLSVK). A helical membrane pass occupies residues 87-107 (AFAGGVILATGLVHILPAAFE). Residues 108-121 (ALSSPCLVGGPWKR) lie on the Extracellular side of the membrane. Residues 122–142 (FPFAGMVAMVSAIGTLIVDTV) form a helical membrane-spanning segment. Residues 143-198 (ATGYFHRTDAKRKAAAVADEPADDLEASDEHSHGHAHGMSVMSVAPAGEEDLVRHR) lie on the Cytoplasmic side of the membrane. Residues 199-219 (VISQVLELGVVVHSLIIGMSL) form a helical membrane-spanning segment. At 220–230 (GASDFPSTVRP) the chain is on the extracellular side. A helical membrane pass occupies residues 231–251 (LVPALTFHQFFEGIGLGGCIV). Over 252 to 260 (QAKFRVRSV) the chain is Cytoplasmic. The helical transmembrane segment at 261-281 (VTMALFFSLTTPAGIVVGIGI) threads the bilayer. Residues 282–292 (SSVYDANSPTA) lie on the Extracellular side of the membrane. The chain crosses the membrane as a helical span at residues 293 to 313 (LVVQGLLEAAAAGILVYMALV). At 314-332 (DILAEDFMKTKVQRRGRLQ) the chain is on the cytoplasmic side. Residues 333–353 (LAMNVALLLGAGLMSMIAIWA) form a helical membrane-spanning segment.

The protein belongs to the ZIP transporter (TC 2.A.5) family.

Its subcellular location is the cell membrane. Zinc transporter that mediates zinc uptake from the rhizosphere and may be responsible for the translocation of zinc within the plant. The chain is Zinc transporter 5 (ZIP5) from Oryza sativa subsp. japonica (Rice).